Consider the following 489-residue polypeptide: Penton protein (489 aa).

This sequence belongs to the adenoviridae penton family. As to quaternary structure, interacts with the fiber protein (via N-terminal tail region). Interacts with the capsid vertex protein; this interaction binds the penton base to neighboring peripentonal hexons.

Its subcellular location is the virion. The protein localises to the host nucleus. Its function is as follows. Major capsid protein that self-associates to form penton base pentamers, each in the shape of a pentagon, situated at the 12 vertices of the pseudo T=25 capsid. Involved in virus secondary attachment to host cell after initial attachment by the fiber protein, and in endocytosis of virions. As the virus enters the host cell, penton proteins are shed concomitant with virion acidification in the endosome. This chain is Penton protein, found in Murine adenovirus A serotype 1 (MAdV-1).